A 338-amino-acid polypeptide reads, in one-letter code: Eukaryotic translation initiation factor 3 subunit H (338 aa).

Residues 22–154 enclose the MPN domain; it reads VQCDGLAVMK…LKAYRLTPQA (133 aa).

This sequence belongs to the eIF-3 subunit H family. As to quaternary structure, component of the eukaryotic translation initiation factor 3 (eIF-3) complex. The eIF-3 complex interacts with pix. Interacts with mxt.

Its subcellular location is the cytoplasm. Functionally, component of the eukaryotic translation initiation factor 3 (eIF-3) complex, which is involved in protein synthesis of a specialized repertoire of mRNAs and, together with other initiation factors, stimulates binding of mRNA and methionyl-tRNAi to the 40S ribosome. The eIF-3 complex specifically targets and initiates translation of a subset of mRNAs involved in cell proliferation. This Drosophila sechellia (Fruit fly) protein is Eukaryotic translation initiation factor 3 subunit H.